We begin with the raw amino-acid sequence, 808 residues long: Probable inorganic carbon transporter subunit DabA (808 aa).

Residues Cys335, Asp337, His497, and Cys512 each contribute to the Zn(2+) site.

This sequence belongs to the inorganic carbon transporter (TC 9.A.2) DabA family. In terms of assembly, forms a complex with DabB. It depends on Zn(2+) as a cofactor.

The protein localises to the cell inner membrane. In terms of biological role, part of an energy-coupled inorganic carbon pump. The protein is Probable inorganic carbon transporter subunit DabA of Rhodopseudomonas palustris (strain ATCC BAA-98 / CGA009).